The primary structure comprises 809 residues: Ecotropic viral integration site 5 protein (809 aa).

Positions 1-483 (MVTTKMTAAF…EAESQCALKE (483 aa)) are interaction with alpha-tubulin, gamma-tubulin, BIRC5 and FBXO5. Disordered regions lie at residues 49–80 (VASP…KLSP) and 99–123 (DSKS…SSSA). Residues 51 to 78 (SPSASLHTTSSSTTLSTPTQSPSSPSKL) are compositionally biased toward low complexity. Residues Ser102 and Ser113 each carry the phosphoserine modification. The segment covering 103-123 (LRSVNGSRRNSGSSLVSSSSA) has biased composition (low complexity). The tract at residues 128 to 693 (SHLEEDSWIL…LNRSDSNQYI (566 aa)) is dimerization. The Rab-GAP TBC domain maps to 163 to 348 (GIPHHFRAIV…RIFDIFMSEG (186 aa)). Residues 377-809 (QHFQKVIPHQ…PQRESYSTTV (433 aa)) form a targeting to the centrosomes region. Residues 406-717 (KKMKKLEKEY…RCLKGQRDFS (312 aa)) are a coiled coil. The segment at 487–809 (KVLDIEKKNN…PQRESYSTTV (323 aa)) is interaction with AURKB and INCENP. Ser497, Ser689, Ser776, and Ser778 each carry phosphoserine. A disordered region spans residues 760 to 809 (HRKSGPMSLNPALADGSESEAEDGMLGPQESDPEAPQKQPPQRESYSTTV). Over residues 799 to 809 (PPQRESYSTTV) the composition is skewed to polar residues.

In terms of assembly, dimeric and monomeric. Interacts with alpha- and gamma-tubulin. Interacts with FBXO5. Interacts with the chromosome passenger complex (CPC) which is at least composed of AURKB/aurora-B, BIRC5/survivin, CDCA8/borealin and INCENP. In terms of processing, probably phosphorylated by PLK1; may be required for degradation during mitosis. Ubiquitinated. Degradation during prophase is ubiquitin-dependent. As to expression, widely expressed.

The protein resides in the nucleus. The protein localises to the cytoplasm. Its subcellular location is the cytoskeleton. It is found in the microtubule organizing center. It localises to the centrosome. The protein resides in the spindle. Functions as a regulator of cell cycle progression by stabilizing the FBXO5 protein and promoting cyclin-A accumulation during interphase. May play a role in cytokinesis. The protein is Ecotropic viral integration site 5 protein (Evi5) of Mus musculus (Mouse).